A 256-amino-acid chain; its full sequence is Ribosomal RNA small subunit methyltransferase J (256 aa).

S-adenosyl-L-methionine is bound by residues 104–105, 120–121, 156–157, and aspartate 174; these read RD, ER, and SS.

Belongs to the methyltransferase superfamily. RsmJ family.

The protein localises to the cytoplasm. The catalysed reaction is guanosine(1516) in 16S rRNA + S-adenosyl-L-methionine = N(2)-methylguanosine(1516) in 16S rRNA + S-adenosyl-L-homocysteine + H(+). Specifically methylates the guanosine in position 1516 of 16S rRNA. This chain is Ribosomal RNA small subunit methyltransferase J, found in Yersinia pseudotuberculosis serotype O:3 (strain YPIII).